Consider the following 239-residue polypeptide: Small ribosomal subunit protein uS3c (239 aa).

The region spanning 43–139 (IKNYIQKNRK…RFNISIEKVK (97 aa)) is the KH type-2 domain. The interval 50-74 (NRKKGSNRKIESDSSSEVITHNRKM) is disordered.

Belongs to the universal ribosomal protein uS3 family. Part of the 30S ribosomal subunit.

Its subcellular location is the plastid. It is found in the chloroplast. In Triticum aestivum (Wheat), this protein is Small ribosomal subunit protein uS3c (rps3).